Reading from the N-terminus, the 135-residue chain is Phosphoribosyl-AMP cyclohydrolase (135 aa).

Mg(2+) is bound at residue aspartate 89. Zn(2+) is bound at residue cysteine 90. Mg(2+) contacts are provided by aspartate 91 and aspartate 93. Cysteine 106 and cysteine 113 together coordinate Zn(2+).

Belongs to the PRA-CH family. Homodimer. Mg(2+) serves as cofactor. It depends on Zn(2+) as a cofactor.

Its subcellular location is the cytoplasm. It catalyses the reaction 1-(5-phospho-beta-D-ribosyl)-5'-AMP + H2O = 1-(5-phospho-beta-D-ribosyl)-5-[(5-phospho-beta-D-ribosylamino)methylideneamino]imidazole-4-carboxamide. Its pathway is amino-acid biosynthesis; L-histidine biosynthesis; L-histidine from 5-phospho-alpha-D-ribose 1-diphosphate: step 3/9. Catalyzes the hydrolysis of the adenine ring of phosphoribosyl-AMP. This chain is Phosphoribosyl-AMP cyclohydrolase, found in Bifidobacterium adolescentis (strain ATCC 15703 / DSM 20083 / NCTC 11814 / E194a).